A 126-amino-acid polypeptide reads, in one-letter code: Anti-adapter protein IraD (126 aa).

Belongs to the GpW/Gp25 family. IraD subfamily. Interacts with RssB.

The protein resides in the cytoplasm. Inhibits RpoS proteolysis by regulating RssB activity, thereby increasing the stability of the sigma stress factor RpoS during oxidative stress. Its effect on RpoS stability is due to its interaction with RssB, which probably blocks the interaction of RssB with RpoS, and the consequent delivery of the RssB-RpoS complex to the ClpXP protein degradation pathway. The protein is Anti-adapter protein IraD of Salmonella choleraesuis (strain SC-B67).